Reading from the N-terminus, the 667-residue chain is tRNA 5-methylaminomethyl-2-thiouridine biosynthesis bifunctional protein MnmC (667 aa).

The span at 1-12 (MSKQQAPNTTGI) shows a compositional bias: polar residues. The tract at residues 1 to 20 (MSKQQAPNTTGIGTADLQWH) is disordered. Residues 1–240 (MSKQQAPNTT…KRECLRGVLE (240 aa)) are tRNA (mnm(5)s(2)U34)-methyltransferase. An FAD-dependent cmnm(5)s(2)U34 oxidoreductase region spans residues 268–667 (IGAGIAGAAC…LVRSLKKPPL (400 aa)).

This sequence in the N-terminal section; belongs to the methyltransferase superfamily. tRNA (mnm(5)s(2)U34)-methyltransferase family. In the C-terminal section; belongs to the DAO family. The cofactor is FAD.

Its subcellular location is the cytoplasm. The catalysed reaction is 5-aminomethyl-2-thiouridine(34) in tRNA + S-adenosyl-L-methionine = 5-methylaminomethyl-2-thiouridine(34) in tRNA + S-adenosyl-L-homocysteine + H(+). Functionally, catalyzes the last two steps in the biosynthesis of 5-methylaminomethyl-2-thiouridine (mnm(5)s(2)U) at the wobble position (U34) in tRNA. Catalyzes the FAD-dependent demodification of cmnm(5)s(2)U34 to nm(5)s(2)U34, followed by the transfer of a methyl group from S-adenosyl-L-methionine to nm(5)s(2)U34, to form mnm(5)s(2)U34. The chain is tRNA 5-methylaminomethyl-2-thiouridine biosynthesis bifunctional protein MnmC from Magnetococcus marinus (strain ATCC BAA-1437 / JCM 17883 / MC-1).